The chain runs to 234 residues: C2H2-type zinc-finger transcription factor clz7 (234 aa).

Disordered regions lie at residues 45 to 99 (RPEG…SRVD) and 118 to 154 (SAQPDFEDWGDLGDLMPEVLPESSGTSSGAATDNGTA). 2 stretches are compositionally biased toward low complexity: residues 66 to 77 (SQSSNTSPTSES) and 140 to 154 (SSGTSSGAATDNGTA). The segment at 159 to 184 (NRCWDHGCNGKKFLNHSNLVRHRREN) adopts a C2H2-type 1; degenerate zinc-finger fold. A C2H2-type 2; degenerate zinc finger spans residues 191–223 (FICPMCGAYFSRSTARNQHLEKKSCNRVRRYSN).

This sequence belongs to the GLI C2H2-type zinc-finger protein family.

The protein localises to the nucleus. Its function is as follows. Transcription factor that probably regulates the expression of the gene cluster that mediates the biosynthesis of squalestatin S1 (SQS1, also known as zaragozic acid A), a heavily oxidized fungal polyketide that offers potent cholesterol lowering activity by targeting squalene synthase (SS). The protein is C2H2-type zinc-finger transcription factor clz7 of Cochliobolus lunatus (Filamentous fungus).